Consider the following 306-residue polypeptide: MNMLLEINDLNSYDIEFIFDTAIQHFNNSNVSNNSLYGKTIVNLFFESSTRTLSSFEISAKSLGAHTVTINVSTSSMNKGESIIDTVLNINAMNPDLIIIRSQYSQFIKEISKYLPNCHIINAGDGHHEHPTQALIDYCTIRYIKGKIHNLNISICGDILHSRVARSNIRLLSRYGANISIVAPPTLICNLKGVSHIHHNFVEGISDSDVIMLLRLQKERMTNFTISSEEEYAYLYMLNYENLSYARSDVIVMHPGPTNKGVEISHYVAEKKSIILLQVKMGVAVRKAILEYLLCHKLVKDMGNIT.

Carbamoyl phosphate-binding residues include Arg51 and Thr52. L-aspartate is bound at residue Lys79. 3 residues coordinate carbamoyl phosphate: Arg101, His130, and Gln133. Residues Arg163 and Arg215 each contribute to the L-aspartate site. Carbamoyl phosphate contacts are provided by Gly256 and Pro257.

Belongs to the aspartate/ornithine carbamoyltransferase superfamily. ATCase family. In terms of assembly, heterododecamer (2C3:3R2) of six catalytic PyrB chains organized as two trimers (C3), and six regulatory PyrI chains organized as three dimers (R2).

The catalysed reaction is carbamoyl phosphate + L-aspartate = N-carbamoyl-L-aspartate + phosphate + H(+). It participates in pyrimidine metabolism; UMP biosynthesis via de novo pathway; (S)-dihydroorotate from bicarbonate: step 2/3. Functionally, catalyzes the condensation of carbamoyl phosphate and aspartate to form carbamoyl aspartate and inorganic phosphate, the committed step in the de novo pyrimidine nucleotide biosynthesis pathway. In Ehrlichia ruminantium (strain Welgevonden), this protein is Aspartate carbamoyltransferase catalytic subunit.